The chain runs to 417 residues: Pelargonidin 3-O-(6-caffeoylglucoside) 5-O-(6-O-malonylglucoside) 4'''-malonyltransferase (417 aa).

Active-site proton acceptor residues include His147 and Asp360.

Belongs to the plant acyltransferase family. As to quaternary structure, monomer. As to expression, expressed at higher level in recently opened, fully pigmented flowers.

The enzyme catalyses 4'''-demalonylsalvianin + malonyl-CoA = salvianin + CoA. Its pathway is pigment biosynthesis; anthocyanin biosynthesis. Inhibited by the following metal ions: Cd(2+), Cu(2+), Fe(2+), Hg(2+) and Zn(2+). Activity is strongly inhibited by CoA-SH and partially inhibited by acetyl-CoA, caffeic acid and bisdemalonylsalvianin. Functionally, catalyzes the transfer of the malonyl group from malonyl-CoA to the 4'''-hydroxyl group of the 5-glucosyl moiety of anthocyanins. Anthocyanins are ubiquitous colored pigments that are responsible for petal color. The protein is Pelargonidin 3-O-(6-caffeoylglucoside) 5-O-(6-O-malonylglucoside) 4'''-malonyltransferase of Salvia splendens (Scarlet sage).